A 505-amino-acid polypeptide reads, in one-letter code: Deoxyguanosinetriphosphate triphosphohydrolase (505 aa).

Residues 66 to 273 form the HD domain; it reads RLTHSMEVQQ…MEAADDISYC (208 aa).

This sequence belongs to the dGTPase family. Type 1 subfamily. As to quaternary structure, homotetramer. Requires Mg(2+) as cofactor.

It catalyses the reaction dGTP + H2O = 2'-deoxyguanosine + triphosphate + H(+). Functionally, dGTPase preferentially hydrolyzes dGTP over the other canonical NTPs. In Shigella boydii serotype 18 (strain CDC 3083-94 / BS512), this protein is Deoxyguanosinetriphosphate triphosphohydrolase.